We begin with the raw amino-acid sequence, 223 residues long: Neurotrophic factor BDNF precursor form (223 aa).

A signal peptide spans 1 to 5 (SCMKA). The propeptide occupies 6 to 114 (APMKEVSIRG…AANMSMRVRR (109 aa)). An N-linked (GlcNAc...) asparagine glycan is attached at asparagine 107. Cystine bridges form between cysteine 127/cysteine 194 and cysteine 172/cysteine 223.

Belongs to the NGF-beta family.

Its subcellular location is the secreted. Functionally, promotes the survival of neuronal populations that are all located either in the central nervous system or directly connected to it. The sequence is that of Neurotrophic factor BDNF precursor form (BDNF) from Charina bottae (Northern rubber boa).